The following is an 89-amino-acid chain: Small ribosomal subunit protein uS15 (89 aa).

The protein belongs to the universal ribosomal protein uS15 family. As to quaternary structure, part of the 30S ribosomal subunit. Forms a bridge to the 50S subunit in the 70S ribosome, contacting the 23S rRNA.

One of the primary rRNA binding proteins, it binds directly to 16S rRNA where it helps nucleate assembly of the platform of the 30S subunit by binding and bridging several RNA helices of the 16S rRNA. In terms of biological role, forms an intersubunit bridge (bridge B4) with the 23S rRNA of the 50S subunit in the ribosome. The sequence is that of Small ribosomal subunit protein uS15 from Corynebacterium urealyticum (strain ATCC 43042 / DSM 7109).